Here is a 101-residue protein sequence, read N- to C-terminus: Ubiquitin-related modifier 1 homolog (101 aa).

Gly101 is modified (1-thioglycine). Gly101 participates in a covalent cross-link: Glycyl lysine isopeptide (Gly-Lys) (interchain with K-? in acceptor proteins).

It belongs to the URM1 family. In terms of assembly, interacts with cer. C-terminal thiocarboxylation occurs in 2 steps, it is first acyl-adenylated (-COAMP) via the hesA/moeB/thiF part of the MOCS3 homolog, then thiocarboxylated (-COSH) via the rhodanese domain of the MOCS3 homolog.

Its subcellular location is the cytoplasm. It participates in tRNA modification; 5-methoxycarbonylmethyl-2-thiouridine-tRNA biosynthesis. In terms of biological role, acts as a sulfur carrier required for 2-thiolation of mcm(5)S(2)U at tRNA wobble positions of cytosolic tRNA(Lys), tRNA(Glu) and tRNA(Gln). Serves as sulfur donor in tRNA 2-thiolation reaction by being thiocarboxylated (-COSH) at its C-terminus by MOCS3. The sulfur is then transferred to tRNA to form 2-thiolation of mcm(5)S(2)U. Also acts as a ubiquitin-like protein (UBL) that is covalently conjugated via an isopeptide bond to lysine residues of target proteins such as Prx2/Jafrac1, Ciao1, Eip71CD and GILT1. The thiocarboxylated form serves as substrate for conjugation and oxidative stress specifically induces the formation of UBL-protein conjugates. The chain is Ubiquitin-related modifier 1 homolog from Drosophila erecta (Fruit fly).